Reading from the N-terminus, the 371-residue chain is Cytochrome b (371 aa).

A run of 4 helical transmembrane segments spans residues 25–45 (FGSM…FLAV), 69–90 (WMMQ…YIHI), 105–125 (WMSG…GYVL), and 170–190 (FFAL…LHII). 2 residues coordinate heme b: H75 and H89. The heme b site is built by H174 and H188. Residue H193 coordinates a ubiquinone. Transmembrane regions (helical) follow at residues 218–238 (HKDL…VSFF), 280–300 (LGGA…PFTH), 312–332 (LSQL…WAAT), and 339–358 (FIAI…LSIP).

This sequence belongs to the cytochrome b family. As to quaternary structure, the cytochrome bc1 complex contains 3 respiratory subunits (MT-CYB, CYC1 and UQCRFS1), 2 core proteins (UQCRC1 and UQCRC2) and probably 6 low-molecular weight proteins. Heme b serves as cofactor.

Its subcellular location is the mitochondrion inner membrane. Component of the ubiquinol-cytochrome c reductase complex (complex III or cytochrome b-c1 complex) that is part of the mitochondrial respiratory chain. The b-c1 complex mediates electron transfer from ubiquinol to cytochrome c. Contributes to the generation of a proton gradient across the mitochondrial membrane that is then used for ATP synthesis. This is Cytochrome b (MT-CYB) from Liasis olivaceus (Olive python).